A 314-amino-acid chain; its full sequence is tRNA dimethylallyltransferase (314 aa).

ATP is bound at residue G6–T13. T8–T13 lines the substrate pocket. The segment at D31–Q34 is interaction with substrate tRNA.

Belongs to the IPP transferase family. Monomer. The cofactor is Mg(2+).

The catalysed reaction is adenosine(37) in tRNA + dimethylallyl diphosphate = N(6)-dimethylallyladenosine(37) in tRNA + diphosphate. Its function is as follows. Catalyzes the transfer of a dimethylallyl group onto the adenine at position 37 in tRNAs that read codons beginning with uridine, leading to the formation of N6-(dimethylallyl)adenosine (i(6)A). This is tRNA dimethylallyltransferase from Pseudothermotoga lettingae (strain ATCC BAA-301 / DSM 14385 / NBRC 107922 / TMO) (Thermotoga lettingae).